Here is a 137-residue protein sequence, read N- to C-terminus: Ribosome-binding factor A (137 aa).

It belongs to the RbfA family. Monomer. Binds 30S ribosomal subunits, but not 50S ribosomal subunits or 70S ribosomes.

It localises to the cytoplasm. Its function is as follows. One of several proteins that assist in the late maturation steps of the functional core of the 30S ribosomal subunit. Associates with free 30S ribosomal subunits (but not with 30S subunits that are part of 70S ribosomes or polysomes). Required for efficient processing of 16S rRNA. May interact with the 5'-terminal helix region of 16S rRNA. The polypeptide is Ribosome-binding factor A (Erwinia tasmaniensis (strain DSM 17950 / CFBP 7177 / CIP 109463 / NCPPB 4357 / Et1/99)).